A 309-amino-acid polypeptide reads, in one-letter code: Serine/threonine-protein phosphatase PP2A catalytic subunit (309 aa).

Residues aspartate 57, histidine 59, aspartate 85, and asparagine 117 each contribute to the Mn(2+) site. The Proton donor role is filled by histidine 118. Mn(2+) contacts are provided by histidine 167 and histidine 241.

Belongs to the PPP phosphatase family. PP-2A subfamily. It depends on Mn(2+) as a cofactor.

The enzyme catalyses O-phospho-L-seryl-[protein] + H2O = L-seryl-[protein] + phosphate. It carries out the reaction O-phospho-L-threonyl-[protein] + H2O = L-threonyl-[protein] + phosphate. This chain is Serine/threonine-protein phosphatase PP2A catalytic subunit, found in Brassica napus (Rape).